The sequence spans 554 residues: Phospholipase B-like protein E (554 aa).

Positions M1–S19 are cleaved as a signal peptide. N-linked (GlcNAc...) asparagine glycans are attached at residues N113, N140, N231, N302, N340, and N546.

The protein belongs to the phospholipase B-like family.

Its subcellular location is the secreted. Probable phospholipase. The protein is Phospholipase B-like protein E (plbE) of Dictyostelium discoideum (Social amoeba).